Reading from the N-terminus, the 319-residue chain is 12-(S)-hydroxy-5,8,10,14-eicosatetraenoic acid receptor (319 aa).

Topologically, residues Met-1–Ala-16 are extracellular. N-linked (GlcNAc...) asparagine glycosylation is present at Asn-5. A helical membrane pass occupies residues Val-17–Trp-37. At Thr-38–Tyr-52 the chain is on the cytoplasmic side. A helical membrane pass occupies residues Leu-53–Phe-73. Topologically, residues Tyr-74–Leu-91 are extracellular. A helical membrane pass occupies residues Phe-92–Leu-110. The Cytoplasmic portion of the chain corresponds to Asp-111–Ala-131. The helical transmembrane segment at Trp-132–Thr-152 threads the bilayer. Residues Cys-153 to Val-180 are Extracellular-facing. Residues Leu-181–Ile-201 form a helical membrane-spanning segment. The Cytoplasmic portion of the chain corresponds to Arg-202 to Arg-219. A helical transmembrane segment spans residues Ala-220–Leu-240. Residues Thr-241–Asp-265 are Extracellular-facing. Residues Ile-266–Phe-284 form a helical membrane-spanning segment. The Cytoplasmic portion of the chain corresponds to Ser-285 to Ser-319.

Belongs to the G-protein coupled receptor 1 family. As to quaternary structure, interacts with KRAS; in a farnesylation-dependent manner.

The protein localises to the cell membrane. Its function is as follows. High-affinity receptor for 12-(S)-hydroxy-5,8,10,14-eicosatetraenoic acid (12-S-HETE), with much lower affinities for other HETE isomers. 12-S-HETE is a eicosanoid, a 12-lipoxygenase (ALOX12) metabolite of arachidonic acid, involved in many physiologic and pathologic processes, such as cell growth, adhesion, inflammation and cancer promotion. 12-S-HETE-binding leads to activation of ERK1/2 (MAPK3/MAPK1), MEK, and NF-kappa-B pathways and leads to cell growth. Plays a crucial role for proliferation, survival and macropinocytosis of KRAS-dependent cancer cells by mediating the translocation of KRAS from the endoplasmic reticulum to the plasma membrane (PM) and its association with the PM. Contributes to enhanced immune responses by inducing dendrite protrusion of small intestinal CX3CR1(+) phagocytes for the uptake of luminal antigens. Also acts as a key receptor for 12-(S)-HETE-mediated liver ischemia reperfusion injury. Functionally, proton-sensing G protein-coupled receptor. The sequence is that of 12-(S)-hydroxy-5,8,10,14-eicosatetraenoic acid receptor (Gpr31) from Mus musculus (Mouse).